The following is a 315-amino-acid chain: Glycine--tRNA ligase alpha subunit (315 aa).

This sequence belongs to the class-II aminoacyl-tRNA synthetase family. In terms of assembly, tetramer of two alpha and two beta subunits.

It is found in the cytoplasm. It catalyses the reaction tRNA(Gly) + glycine + ATP = glycyl-tRNA(Gly) + AMP + diphosphate. This Pseudomonas putida (strain GB-1) protein is Glycine--tRNA ligase alpha subunit.